Consider the following 1052-residue polypeptide: MSAILPGYAELHCQSNFSFLQGASHPEELVTRAGELGYAALALTDECSLAGVVRAHVEAREQKLPLIIGSSFTLQAGADAPPLDLTLLAQNREGYGNLAELITLGRGRAAKGQYLLTPADIEAPAGDNAHLRGMPDCLAILAPPPGLAAERLAEQARWLAAQCPGRAWIGLTLLHHCRDDLHRAAVEHAAHASGLPIVALGQAQMHRRSRKPLHDTLAAIRTGRSVGQCGYDLAANAERHLRSRLRLASLYPAQALAQTLAIARRCTFSLDELQYEYPDEIVPAGHTPASYLRQQTYLGARQRFPEGMTPAVAAQVEKELALINELRYEAYFLTVYDIVGYARSQGILCQGRGSAANSAVCYCLGITAVDPARGNTLFERFISKERNEPPDIDVDFEHQRREEVIQYIYEKYGRQRAALTAVVISYRPRSVLRDTGRALGVDNGIIDAVARAHQWWDGKKEMLRSLAACGLDPASRVARQWAELAETLMGFPRHLSQHPGGFVISRGKLSRLVPIENAAMPGRSVVQWDKDDLDALRLLKVDVLALGMLSVLRRALALAGQRRGRPLALHEIPPDDDATYDMICAADTIGVFQIESRAQMSMLPRLRPRQYYDLVVQVAIVRPGPIQGGMVHPYLRRRQGREDITYPGPAVRKALARTLGVPIFQEQVMQIAVDAAGFTPGEADALRRSMAAWRRKGGVDKFRAQLVGGLLARNYTADFAQALFRQIEGFGEYGFPESHAASFALLAYASSWLKCHEPEAFLAALLNSQPMGFYAPAQLVQDARRHGVRVLPADVLYSGWEASLQDAPGAARPAVRLGLNLVKGLREDSARAIEQARVRRPFADTADMARRAGLPRQALDALAAADALRTLAGHRRLASWQAAASAQSRDLLREAVIVETETPALPAPSEGQTVAADYRSVGLTLGRHPLALLRPQLAARNFQTAAVLNTYPNRRLARACGIVTVRQRPQTAKGTIFVTLEDETGPINAVVRPELIERQRRELLDATLLGIYGTWQSVDGVRHLVAQRLVDLSSLLGQLSQDGLAAASRNFH.

The protein belongs to the DNA polymerase type-C family. DnaE2 subfamily.

Its subcellular location is the cytoplasm. The catalysed reaction is DNA(n) + a 2'-deoxyribonucleoside 5'-triphosphate = DNA(n+1) + diphosphate. DNA polymerase involved in damage-induced mutagenesis and translesion synthesis (TLS). It is not the major replicative DNA polymerase. The chain is Error-prone DNA polymerase from Bordetella bronchiseptica (strain ATCC BAA-588 / NCTC 13252 / RB50) (Alcaligenes bronchisepticus).